Here is a 1088-residue protein sequence, read N- to C-terminus: RNA-directed RNA polymerase (1088 aa).

The RdRp catalytic domain maps to 501-687 (LSYGDVTRFL…AKRYIAGGKI (187 aa)).

This sequence belongs to the reoviridae RNA-directed RNA polymerase family. Interacts with VP3 (Potential). Interacts with VP2; this interaction activates VP1. Interacts with NSP5; this interaction is probably necessary for the formation of functional virus factories. Interacts with NSP2; this interaction is weak. Mg(2+) serves as cofactor.

It localises to the virion. The catalysed reaction is RNA(n) + a ribonucleoside 5'-triphosphate = RNA(n+1) + diphosphate. Its function is as follows. RNA-directed RNA polymerase that is involved in both transcription and genome replication. Together with VP3 capping enzyme, forms an enzyme complex positioned near the channels situated at each of the five-fold vertices of the core. Following infection, the outermost layer of the virus is lost, leaving a double-layered particle (DLP) made up of the core and VP6 shell. VP1 then catalyzes the transcription of fully conservative plus-strand genomic RNAs that are extruded through the DLP's channels into the cytoplasm where they function as mRNAs for translation of viral proteins. One copy of each of the viral (+)RNAs is also recruited during core assembly, together with newly synthesized polymerase complexes and VP2. The polymerase of these novo-formed particles catalyzes the synthesis of complementary minus-strands leading to dsRNA formation. To do so, the polymerase specifically recognizes and binds 4 bases 5'-UGUG-3' in the conserved 3'-sequence of plus-strand RNA templates. VP2 presumably activates the autoinhibited VP1-RNA complex to coordinate packaging and genome replication. Once dsRNA synthesis is complete, the polymerase switches to the transcriptional mode, thus providing secondary transcription. This chain is RNA-directed RNA polymerase, found in Rotavirus A (strain RVA/Human/Philippines/L26/1987/G12P1B[4]) (RV-A).